The sequence spans 61 residues: Small ribosomal subunit protein uS14 (61 aa).

Positions 24, 27, 40, and 43 each coordinate Zn(2+).

Belongs to the universal ribosomal protein uS14 family. Zinc-binding uS14 subfamily. Part of the 30S ribosomal subunit. Contacts proteins S3 and S10. Zn(2+) is required as a cofactor.

Binds 16S rRNA, required for the assembly of 30S particles and may also be responsible for determining the conformation of the 16S rRNA at the A site. The protein is Small ribosomal subunit protein uS14 of Pelobacter propionicus (strain DSM 2379 / NBRC 103807 / OttBd1).